A 576-amino-acid polypeptide reads, in one-letter code: RNA-binding post-transcriptional regulator cip2 (576 aa).

Residues 232–310 form the RRM domain; it reads TAIVIKNIPF…RRLRVEWKRQ (79 aa). The R3H domain occupies 355-420; sequence DPAILNVYSH…AKQVVITMPS (66 aa).

In terms of assembly, interacts with csx1. Phosphorylated by sty1.

The protein resides in the cytoplasm. Regulates global gene expression after oxidative stress. Interacts and stabilizes mRNAs and may regulate their transition between different cytoplasmic components after oxidative stress. The protein is RNA-binding post-transcriptional regulator cip2 (cip2) of Schizosaccharomyces pombe (strain 972 / ATCC 24843) (Fission yeast).